Here is a 277-residue protein sequence, read N- to C-terminus: Protein CIMAP1D (277 aa).

3 STPGR repeats span residues 122–148 (PGPGAYSPEKAPPVRQRNAPAFTLGSR), 202–227 (PGPGQYESPDPNTYRQRRPAFSILGR), and 238–263 (PGPGTHNPEQVTVNRARAPAYTMGIR). Positions 181–277 (PSYTVVGRTP…ASTMVGDTKC (97 aa)) are disordered.

It belongs to the CIMAP family.

In Mus musculus (Mouse), this protein is Protein CIMAP1D (Cimap1d).